The sequence spans 463 residues: Soluble pyridine nucleotide transhydrogenase (463 aa).

Glu35–Cys44 lines the FAD pocket.

Belongs to the class-I pyridine nucleotide-disulfide oxidoreductase family. The cofactor is FAD.

It is found in the cytoplasm. The enzyme catalyses NAD(+) + NADPH = NADH + NADP(+). Conversion of NADPH, generated by peripheral catabolic pathways, to NADH, which can enter the respiratory chain for energy generation. This Marinobacter nauticus (strain ATCC 700491 / DSM 11845 / VT8) (Marinobacter aquaeolei) protein is Soluble pyridine nucleotide transhydrogenase.